The chain runs to 457 residues: GTPase Der (457 aa).

2 EngA-type G domains span residues 4–169 and 177–352; these read PTIA…PENN and IMMS…NQHR. Residues 10–17, 57–61, 120–123, 183–190, 230–234, and 295–298 each bind GTP; these read GRPNVGKS, DTGGL, NKCE, DTAGI, and NKWD. The KH-like domain maps to 353 to 438; it reads RRVTTSVVNE…PLILLWRGKQ (86 aa).

Belongs to the TRAFAC class TrmE-Era-EngA-EngB-Septin-like GTPase superfamily. EngA (Der) GTPase family. As to quaternary structure, associates with the 50S ribosomal subunit.

Functionally, GTPase that plays an essential role in the late steps of ribosome biogenesis. This chain is GTPase Der, found in Prochlorococcus marinus (strain AS9601).